A 440-amino-acid chain; its full sequence is Proline--tRNA ligase (440 aa).

It belongs to the class-II aminoacyl-tRNA synthetase family. ProS type 2 subfamily. Homodimer.

It is found in the cytoplasm. The catalysed reaction is tRNA(Pro) + L-proline + ATP = L-prolyl-tRNA(Pro) + AMP + diphosphate. In terms of biological role, catalyzes the attachment of proline to tRNA(Pro) in a two-step reaction: proline is first activated by ATP to form Pro-AMP and then transferred to the acceptor end of tRNA(Pro). This is Proline--tRNA ligase from Xanthobacter autotrophicus (strain ATCC BAA-1158 / Py2).